Consider the following 177-residue polypeptide: Dual-action ribosomal maturation protein DarP (177 aa).

This sequence belongs to the DarP family.

Its subcellular location is the cytoplasm. In terms of biological role, member of a network of 50S ribosomal subunit biogenesis factors which assembles along the 30S-50S interface, preventing incorrect 23S rRNA structures from forming. Promotes peptidyl transferase center (PTC) maturation. In Glaesserella parasuis serovar 5 (strain SH0165) (Haemophilus parasuis), this protein is Dual-action ribosomal maturation protein DarP.